Here is a 259-residue protein sequence, read N- to C-terminus: MEDVQGRADTRQIEINKVGIKDIRHPVRVRDRTGRDQHTVATFSMYVNLPQHFKGTHMSRFVSILEGHDREVTVESFHEMLAEMTDRLEAHSGHIEMAFPYFVNKQAPVTGVESLMDYEVTFIGEIHGGRHETWVRVAVPITTLCPCSKEIAERGAHNQRSLVVVTALMDGFVWLEELIDLVEREGSCELYGLLKRPDEKHVTERAYDNPKFVEDVVRDIAGRLNDDGRIAAYSVTSENYESIHNHSAFALIEQDKRGR.

Belongs to the GTP cyclohydrolase IV family.

It catalyses the reaction GTP + H2O = 7,8-dihydroneopterin 3'-triphosphate + formate + H(+). It functions in the pathway cofactor biosynthesis; 7,8-dihydroneopterin triphosphate biosynthesis; 7,8-dihydroneopterin triphosphate from GTP: step 1/1. In terms of biological role, converts GTP to 7,8-dihydroneopterin triphosphate. The chain is GTP cyclohydrolase FolE2 from Halorhodospira halophila (strain DSM 244 / SL1) (Ectothiorhodospira halophila (strain DSM 244 / SL1)).